Here is a 123-residue protein sequence, read N- to C-terminus: Neuropeptide-like peptides nlp-40 (123 aa).

The signal sequence occupies residues Met1–Ala17. 3 consecutive propeptides follow at residues Arg30–Ala31, Lys66–Arg67, and Lys75–Arg76.

As to expression, expressed in intestinal cells.

It is found in the secreted. It localises to the cytoplasmic vesicle. Neuropeptide ligand for the G-protein coupled receptor aex-2. Activates and regulates the rhythmic calcium influx in DVB GABergic neurons during the defecation motor program, which is a coordinated series of three muscle contractions that occurs every 45 seconds. The sequence is that of Neuropeptide-like peptides nlp-40 from Caenorhabditis elegans.